We begin with the raw amino-acid sequence, 154 residues long: MLKKIDLYTDGSCLGNPGPGGYGAVMVYGKHRKELAGGFRLTTNNRMELMAAIMGLRTLNEPCQVRLTTDSQYVRQGITQWIIGWKKKGWVTASRQPVKNVDLWQALDAEVARHQIEWLWVKGHSGHPENERCDELAREAASGKQLAEDTGYQP.

An RNase H type-1 domain is found at 1–142 (MLKKIDLYTD…CDELAREAAS (142 aa)). Residues Asp-10, Glu-48, Asp-70, and Asp-134 each contribute to the Mg(2+) site. Residues 133-154 (CDELAREAASGKQLAEDTGYQP) form a disordered region.

This sequence belongs to the RNase H family. As to quaternary structure, monomer. The cofactor is Mg(2+).

The protein resides in the cytoplasm. It carries out the reaction Endonucleolytic cleavage to 5'-phosphomonoester.. Endonuclease that specifically degrades the RNA of RNA-DNA hybrids. The protein is Ribonuclease H of Aeromonas hydrophila subsp. hydrophila (strain ATCC 7966 / DSM 30187 / BCRC 13018 / CCUG 14551 / JCM 1027 / KCTC 2358 / NCIMB 9240 / NCTC 8049).